A 364-amino-acid polypeptide reads, in one-letter code: Methylthioribose-1-phosphate isomerase (364 aa).

Residue Asp254 is the Proton donor of the active site.

This sequence belongs to the eIF-2B alpha/beta/delta subunits family. MtnA subfamily.

The protein resides in the cytoplasm. Its subcellular location is the nucleus. It catalyses the reaction 5-(methylsulfanyl)-alpha-D-ribose 1-phosphate = 5-(methylsulfanyl)-D-ribulose 1-phosphate. It functions in the pathway amino-acid biosynthesis; L-methionine biosynthesis via salvage pathway; L-methionine from S-methyl-5-thio-alpha-D-ribose 1-phosphate: step 1/6. Its function is as follows. Catalyzes the interconversion of methylthioribose-1-phosphate (MTR-1-P) into methylthioribulose-1-phosphate (MTRu-1-P). In Drosophila erecta (Fruit fly), this protein is Methylthioribose-1-phosphate isomerase.